Consider the following 453-residue polypeptide: Cytochrome P450 monooxygenase CYP2 (453 aa).

A helical transmembrane segment spans residues 13 to 29 (MVITMLHGSSTYSLLAS). A glycan (N-linked (GlcNAc...) asparagine) is linked at asparagine 85. Residue cysteine 397 participates in heme binding.

Belongs to the cytochrome P450 family. Heme serves as cofactor.

The protein localises to the membrane. It functions in the pathway secondary metabolite biosynthesis. In terms of biological role, cytochrome P450 monooxygenase; part of the gene cluster that mediates the biosynthesis of a tyrosine-derived cytochalasan acting as a fungal signal recognized by resistant rice plants and leads to avirulence in Pi33 resistant rice cultivars. The first step in the pathway is catalyzed by the hybrid PKS-NRPS ACE1, assisted by the enoyl reductase RAP1, that are responsible for fusion of the tyrosine precursor and the polyketide backbone. The polyketide synthase module (PKS) of ACE1 is responsible for the synthesis of the polyketide backbone and the downstream nonribosomal peptide synthetase (NRPS) amidates the carboxyl end of the polyketide with the tyrosine precursor. Because ACE1 lacks a designated enoylreductase (ER) domain, the required activity is provided the enoyl reductase RAP1. Reduction by the hydrolyase ORFZ, followed by dehydration and intra-molecular Diels-Alder cyclization by the Diels-Alderase ORF3 then yield the required isoindolone-fused macrocycle. A number of oxidative steps catalyzed by the tailoring enzymes identified within the cluster, including cytochrome P450 monooxygenases CYP1 to CYP4, the FAD-linked oxidoreductase OXR2 and the short-chain dehydrogenase/reductase OXR1, are further required to afford the final cytochalasans that confer avirulence and which have still to be identified. The monooxygenase CYP1 has been shown to be a site-selective C-18 hydroxylase whereas the function of CYP3 is the site-selective epoxidation of the C-6/C-7 olefin that is present in some intermediate compounds. Finally, SYN2 and RAP2 are not required for avirulence in Pi33 resistant rice cultivars. This is Cytochrome P450 monooxygenase CYP2 from Pyricularia oryzae (strain 70-15 / ATCC MYA-4617 / FGSC 8958) (Rice blast fungus).